The following is a 347-amino-acid chain: NADH-ubiquinone oxidoreductase chain 2 (347 aa).

Transmembrane regions (helical) follow at residues 3-23 (PPIF…VMTS), 25-45 (HWML…PILM), 59-79 (YFLT…INLL), 96-116 (ILMT…FWVP), 122-142 (ISLS…LSIL), 149-169 (INPH…GWGG), 178-198 (IMAY…LYNP), 201-221 (MFLN…LFML), 237-257 (APLI…LPPL), 274-294 (EMII…YFYM), and 323-343 (TIFL…TPMI).

It belongs to the complex I subunit 2 family. Core subunit of respiratory chain NADH dehydrogenase (Complex I) which is composed of 45 different subunits. Interacts with TMEM242.

The protein resides in the mitochondrion inner membrane. The enzyme catalyses a ubiquinone + NADH + 5 H(+)(in) = a ubiquinol + NAD(+) + 4 H(+)(out). Core subunit of the mitochondrial membrane respiratory chain NADH dehydrogenase (Complex I) which catalyzes electron transfer from NADH through the respiratory chain, using ubiquinone as an electron acceptor. Essential for the catalytic activity and assembly of complex I. This chain is NADH-ubiquinone oxidoreductase chain 2, found in Viverra tangalunga (Malayan civet).